Reading from the N-terminus, the 240-residue chain is Proteasome subunit beta 1 (240 aa).

Positions 1–46 are cleaved as a propeptide — removed in mature form; by autocatalysis; sequence MRDMTPGPDLSGPQAADEFQSDPYAPEVGELPEQSAQDSEKVNKTG. The tract at residues 1 to 48 is disordered; it reads MRDMTPGPDLSGPQAADEFQSDPYAPEVGELPEQSAQDSEKVNKTGTT. The active-site Nucleophile is Thr47.

This sequence belongs to the peptidase T1B family. In terms of assembly, the 20S proteasome core is composed of 14 alpha and 14 beta subunits that assemble into four stacked heptameric rings, resulting in a barrel-shaped structure. The two inner rings, each composed of seven catalytic beta subunits, are sandwiched by two outer rings, each composed of seven alpha subunits. The catalytic chamber with the active sites is on the inside of the barrel. Has a gated structure, the ends of the cylinder being occluded by the N-termini of the alpha-subunits. Is capped at one or both ends by the proteasome regulatory ATPase, PAN.

Its subcellular location is the cytoplasm. It carries out the reaction Cleavage of peptide bonds with very broad specificity.. With respect to regulation, the formation of the proteasomal ATPase PAN-20S proteasome complex, via the docking of the C-termini of PAN into the intersubunit pockets in the alpha-rings, triggers opening of the gate for substrate entry. Interconversion between the open-gate and close-gate conformations leads to a dynamic regulation of the 20S proteasome proteolysis activity. Component of the proteasome core, a large protease complex with broad specificity involved in protein degradation. In Haloarcula marismortui (strain ATCC 43049 / DSM 3752 / JCM 8966 / VKM B-1809) (Halobacterium marismortui), this protein is Proteasome subunit beta 1.